Here is a 900-residue protein sequence, read N- to C-terminus: Phosphoenolpyruvate carboxylase (900 aa).

Active-site residues include H140 and K568.

It belongs to the PEPCase type 1 family. Requires Mg(2+) as cofactor.

The catalysed reaction is oxaloacetate + phosphate = phosphoenolpyruvate + hydrogencarbonate. Forms oxaloacetate, a four-carbon dicarboxylic acid source for the tricarboxylic acid cycle. The sequence is that of Phosphoenolpyruvate carboxylase from Neisseria meningitidis serogroup A / serotype 4A (strain DSM 15465 / Z2491).